A 22-amino-acid chain; its full sequence is Unknown protein from spot 168 of 2D-PAGE of etiolated coleoptile (22 aa).

This Zea mays (Maize) protein is Unknown protein from spot 168 of 2D-PAGE of etiolated coleoptile.